The chain runs to 335 residues: Proline racemase (335 aa).

The active-site Proton acceptor is Cys91. The active-site Proton donor is Cys256.

This sequence belongs to the proline racemase family.

The catalysed reaction is L-proline = D-proline. With respect to regulation, inhibited by pyrrole-2-carboxylate in vitro. In terms of biological role, catalyzes the reversible interconversion of L- and D-proline. Likely functions as the proline racemase necessary for D-proline generation in order to discriminate it from the L-proline used for protein synthesis. The protein is Proline racemase of Acetoanaerobium sticklandii (strain ATCC 12662 / DSM 519 / JCM 1433 / CCUG 9281 / NCIMB 10654 / HF) (Clostridium sticklandii).